Consider the following 258-residue polypeptide: Spindlin-3 (258 aa).

Positions 1–23 (MKTPFGKAAAGQRSRTGAGHGSV) are disordered. Tudor-like domain stretches follow at residues 50–99 (VGCR…LELH), 129–178 (VGKA…YQLL), and 210–255 (VGKQ…YDLV). Histone H3K4me3 and H3R8me2a binding stretches follow at residues Glu-138 and 246–248 (DFH).

This sequence belongs to the SPIN/STSY family. Interacts with C11orf84/SPINDOC.

Exhibits H3K4me3-binding activity. This is Spindlin-3 (SPIN3) from Pongo abelii (Sumatran orangutan).